We begin with the raw amino-acid sequence, 1489 residues long: FERM domain-containing protein C (1489 aa).

Composition is skewed to polar residues over residues 59 to 79 (DTES…NFNS) and 103 to 118 (NSPL…STSI). 4 disordered regions span residues 59–86 (DTES…HQHL), 103–197 (NSPL…PSTL), 252–271 (NSVQ…NNNN), and 277–312 (EQQQ…TPDS). The span at 131 to 153 (SSSSSSSDGDSNSSSDSSDNSSE) shows a compositional bias: low complexity. Basic residues predominate over residues 163–172 (HLHLHRHHRK). Positions 181–195 (FESSSESSEQYGSPS) are enriched in low complexity. A coiled-coil region spans residues 202-289 (ALKLEKIMQI…QEKQQQQQQH (88 aa)). The span at 277–287 (EQQQEKQQQQQ) shows a compositional bias: low complexity. Residues 303 to 312 (RSVSISTPDS) show a composition bias toward polar residues. Positions 356-383 (IKVSKVLEEEMQLQQEFEKQEQLRHSAR) form a coiled coil. Disordered regions lie at residues 396–435 (NLQD…ENQN), 459–479 (VITP…KILT), and 508–569 (EDPL…TTTT). Residues 421–435 (ENVSNDNSSDNENQN) show a composition bias toward low complexity. The span at 545–555 (TASSSSSPTLQ) shows a compositional bias: polar residues. Residues 556–569 (ATKTTTTTTTTTTT) show a composition bias toward low complexity. The region spanning 637-934 (ILVHISLVDQ…GYKYFIQHDE (298 aa)) is the FERM domain. 13 LRR repeats span residues 1017 to 1040 (KVEL…LKDT), 1053 to 1075 (ENLN…AFEP), 1087 to 1110 (HLNL…IEKY), 1111 to 1133 (PNIE…VILR), 1167 to 1191 (NKTI…IFEG), 1196 to 1219 (SLSL…KFIK), 1254 to 1278 (SCHI…VIKG), 1282 to 1306 (NQTI…LCQS), 1339 to 1362 (NKTI…AIGT), 1367 to 1391 (NETL…ILNG), 1395 to 1418 (NSTI…SLAN), 1428 to 1450 (VITL…QLST), and 1451 to 1474 (NIPI…IKNA).

This chain is FERM domain-containing protein C (frmC), found in Dictyostelium discoideum (Social amoeba).